Consider the following 752-residue polypeptide: DNA topoisomerase 4 subunit A (752 aa).

The region spanning 31–494 is the Topo IIA-type catalytic domain; sequence LPFIGDGLKP…EAKAMSEHDM (464 aa). The active-site O-(5'-phospho-DNA)-tyrosine intermediate is Y120. Residues 472 to 492 are disordered; that stretch reads YGDDRRSPLREREEAKAMSEH. Over residues 473-492 the composition is skewed to basic and acidic residues; the sequence is GDDRRSPLREREEAKAMSEH.

The protein belongs to the type II topoisomerase GyrA/ParC subunit family. ParC type 1 subfamily. Heterotetramer composed of ParC and ParE.

The protein resides in the cell membrane. The catalysed reaction is ATP-dependent breakage, passage and rejoining of double-stranded DNA.. In terms of biological role, topoisomerase IV is essential for chromosome segregation. It relaxes supercoiled DNA. Performs the decatenation events required during the replication of a circular DNA molecule. This chain is DNA topoisomerase 4 subunit A, found in Salmonella typhimurium (strain LT2 / SGSC1412 / ATCC 700720).